A 508-amino-acid polypeptide reads, in one-letter code: ATP synthase subunit alpha, chloroplastic (508 aa).

Residue Gly172–Thr179 coordinates ATP.

Belongs to the ATPase alpha/beta chains family. In terms of assembly, F-type ATPases have 2 components, CF(1) - the catalytic core - and CF(0) - the membrane proton channel. CF(1) has five subunits: alpha(3), beta(3), gamma(1), delta(1), epsilon(1). CF(0) has four main subunits: a, b, b' and c.

It is found in the plastid. The protein localises to the chloroplast thylakoid membrane. It carries out the reaction ATP + H2O + 4 H(+)(in) = ADP + phosphate + 5 H(+)(out). Its function is as follows. Produces ATP from ADP in the presence of a proton gradient across the membrane. The alpha chain is a regulatory subunit. In Psilotum nudum (Whisk fern), this protein is ATP synthase subunit alpha, chloroplastic.